The sequence spans 130 residues: Large ribosomal subunit protein bL12c (130 aa).

It belongs to the bacterial ribosomal protein bL12 family. Homodimer. Part of the ribosomal stalk of the 50S ribosomal subunit. Forms a multimeric L10(L12)X complex, where L10 forms an elongated spine to which 2 to 4 L12 dimers bind in a sequential fashion. Binds GTP-bound translation factors.

Its subcellular location is the plastid. The protein resides in the chloroplast. Forms part of the ribosomal stalk which helps the ribosome interact with GTP-bound translation factors. Is thus essential for accurate translation. The polypeptide is Large ribosomal subunit protein bL12c (Cyanidium caldarium (Red alga)).